A 418-amino-acid polypeptide reads, in one-letter code: Beta-2 adrenergic receptor (418 aa).

Residues methionine 1 to valine 34 lie on the Extracellular side of the membrane. N-linked (GlcNAc...) asparagine glycosylation is found at asparagine 6 and asparagine 15. A helical transmembrane segment spans residues glycine 35 to isoleucine 58. Over alanine 59 to phenylalanine 71 the chain is Cytoplasmic. The helical transmembrane segment at isoleucine 72 to leucine 95 threads the bilayer. Residues methionine 96 to cysteine 106 are Extracellular-facing. 2 disulfides stabilise this stretch: cysteine 106-cysteine 191 and cysteine 184-cysteine 190. The chain crosses the membrane as a helical span at residues glutamate 107–valine 129. Residues aspartate 130–alanine 150 lie on the Cytoplasmic side of the membrane. Tyrosine 141 bears the Phosphotyrosine mark. Residues arginine 151–tyrosine 174 form a helical membrane-spanning segment. The Extracellular portion of the chain corresponds to glutamine 175–asparagine 196. Residues glutamine 197–serine 220 form a helical membrane-spanning segment. Topologically, residues arginine 221–threonine 274 are cytoplasmic. The residue at position 246 (serine 246) is a Phosphoserine. Phosphoserine; by PKA is present on residues serine 261 and serine 262. Residue cysteine 265 is the site of S-palmitoyl cysteine attachment. Residues leucine 275 to isoleucine 298 form a helical membrane-spanning segment. The Extracellular portion of the chain corresponds to histidine 299–lysine 305. The chain crosses the membrane as a helical span at residues glutamate 306 to serine 329. Over proline 330–leucine 418 the chain is Cytoplasmic. Residue cysteine 341 is the site of S-palmitoyl cysteine attachment. Phosphoserine; by PKA is present on residues serine 345 and serine 346. Residues serine 355 and serine 356 each carry the phosphoserine; by BARK modification. Positions arginine 381–leucine 418 are disordered. 2 positions are modified to 4-hydroxyproline: proline 387 and proline 400. Residues aspartate 405–leucine 418 show a composition bias toward polar residues. A PDZ-binding motif is present at residues aspartate 415–leucine 418.

The protein belongs to the G-protein coupled receptor 1 family. Adrenergic receptor subfamily. ADRB2 sub-subfamily. Binds NHERF1 and GPRASP1. Interacts with ARRB1 and ARRB2. Interacts with SRC. Interacts with USP20 and USP33. Interacts with VHL; the interaction, which is increased on hydroxylation of ADRB2, ubiquitinates ADRB2 leading to its degradation. Interacts with EGLN3; the interaction hydroxylates ADRB2 facilitating VHL-E3 ligase-mediated ubiquitination. Interacts (via PDZ-binding motif) with SNX27 (via PDZ domain); the interaction is required when endocytosed to prevent degradation in lysosomes and promote recycling to the plasma membrane. Interacts with CNIH4. Interacts with ARRDC3. Interacts with NEDD4. Interacts with MARCHF2. Palmitoylated; may reduce accessibility of Ser-345 and Ser-346 by anchoring Cys-341 to the plasma membrane. Agonist stimulation promotes depalmitoylation and further allows Ser-345 and Ser-346 phosphorylation. Post-translationally, phosphorylated by PKA and BARK upon agonist stimulation, which mediates homologous desensitization of the receptor. PKA-mediated phosphorylation seems to facilitate phosphorylation by BARK. In terms of processing, phosphorylation of Tyr-141 is induced by insulin and leads to supersensitization of the receptor. Polyubiquitinated. Agonist-induced ubiquitination leads to sort internalized receptors to the lysosomes for degradation. Deubiquitination by USP20 and USP33, leads to ADRB2 recycling and resensitization after prolonged agonist stimulation. USP20 and USP33 are constitutively associated and are dissociated immediately after agonist stimulation. Ubiquitination by the VHL-E3 ligase complex is oxygen-dependent. Post-translationally, hydroxylation by EGLN3 occurs only under normoxia and increases the interaction with VHL and the subsequent ubiquitination and degradation of ADRB2. In terms of processing, palmitoylated. Mainly palmitoylated at Cys-341. Palmitoylation may reduce accessibility of phosphorylation sites by anchoring the receptor to the plasma membrane. Agonist stimulation promotes depalmitoylation and further allows Ser-345 and Ser-346 phosphorylation. Also undergoes transient, ligand-induced palmitoylation at Cys-265 probably by ZDHHC9, ZDHHC14 and ZDHHC18 within the Golgi. Palmitoylation at Cys-265 requires phosphorylation by PKA and receptor internalization and stabilizes the receptor. Could be depalmitoylated by LYPLA1 at the plasma membrane. As to expression, expressed in heart, liver, lung, skeletal muscle and subcutaneous adipose tissue.

It localises to the cell membrane. The protein localises to the early endosome. Its subcellular location is the golgi apparatus. Functionally, beta-adrenergic receptors mediate the catecholamine-induced activation of adenylate cyclase through the action of G proteins. The beta-2-adrenergic receptor binds epinephrine with an approximately 30-fold greater affinity than it does norepinephrine. This Sus scrofa (Pig) protein is Beta-2 adrenergic receptor (ADRB2).